The following is a 465-amino-acid chain: ATP-dependent RNA helicase ddx19 (465 aa).

The segment covering 1–20 (MSEKETNTTSTENKEKEKQE) has biased composition (basic and acidic residues). The interval 1-45 (MSEKETNTTSTENKEKEKQEQTNTNSTTESTNNQVDEEYERPGRS) is disordered. Residues 21–34 (QTNTNSTTESTNNQ) are compositionally biased toward low complexity. Positions 70 to 98 (KTFEELGLKPELLKGVYAMGYNKPSKIQE) match the Q motif motif. Residues 102 to 268 (PIIIQSPNNL…KKIVQDPYTS (167 aa)) enclose the Helicase ATP-binding domain. 115 to 122 (SQSGTGKT) is an ATP binding site. A DEAD box motif is present at residues 215 to 218 (DEAD). A Helicase C-terminal domain is found at 297–449 (ILSDIYGFIS…ELKSSEIESL (153 aa)).

It belongs to the DEAD box helicase family. DDX19/DBP5 subfamily.

It catalyses the reaction ATP + H2O = ADP + phosphate + H(+). In terms of biological role, ATP-binding RNA helicase required for normal differentiation and development. The chain is ATP-dependent RNA helicase ddx19 (helC) from Dictyostelium discoideum (Social amoeba).